We begin with the raw amino-acid sequence, 732 residues long: Prolyl 3-hydroxylase 3 (732 aa).

A signal peptide spans 1–19 (MLRLLRLLLLLLLPPPGSP). Residues 15-25 (PPGSPEPPEPP) show a composition bias toward pro residues. Positions 15–35 (PPGSPEPPEPPGLAQLSPGSP) are disordered. TPR repeat units follow at residues 39–72 (PDLLYADGLRAYSAGAWAPAVALLREALRSRAAL), 152–185 (REPYNYLQRAYYQLKKLDLAASAAHTFFVANPTH), 214–247 (YWAAYDTGLELLEQREAALALPQLEEALQGSLAH), and 312–345 (LSQLRRLHEAYAQVGNMSQAMENVLSVLLFYPED). 2 N-linked (GlcNAc...) asparagine glycosylation sites follow: Asn327 and Asn458. Residues 557 to 671 (THLVCRSAIE…RCALALWHTW (115 aa)) enclose the Fe2OG dioxygenase domain. Fe cation contacts are provided by His580, Asp582, and His652. Arg662 is an active-site residue. Residues 674–703 (EHSEQEWTEAKELLQEEEEEEEEEDILSRD) adopt a coiled-coil conformation. The segment covering 676–687 (SEQEWTEAKELL) has biased composition (basic and acidic residues). A disordered region spans residues 676–732 (SEQEWTEAKELLQEEEEEEEEEDILSRDPSPEPPSHKLQRVQEKAGKPRRVRVREEL). Residues 688 to 698 (QEEEEEEEEED) show a composition bias toward acidic residues. Positions 722 to 732 (KPRRVRVREEL) are enriched in basic residues. Residues 729–732 (REEL) carry the Prevents secretion from ER motif.

The protein belongs to the leprecan family. In terms of assembly, identified in a complex with PLOD1 and P3H4. Fe cation serves as cofactor. The cofactor is L-ascorbate. Detected in kidney (at protein level).

It localises to the endoplasmic reticulum. The enzyme catalyses L-prolyl-[collagen] + 2-oxoglutarate + O2 = trans-3-hydroxy-L-prolyl-[collagen] + succinate + CO2. In terms of biological role, part of a complex composed of PLOD1, P3H3 and P3H4 that catalyzes hydroxylation of lysine residues in collagen alpha chains and is required for normal assembly and cross-linkling of collagen fibrils. Required for normal hydroxylation of lysine residues in type I collagen chains in skin, bone, tendon, aorta and cornea. Required for normal skin stability via its role in hydroxylation of lysine residues in collagen alpha chains and in collagen fibril assembly. Apparently not required for normal prolyl 3-hydroxylation on collagen chains, possibly because it functions redundantly with other prolyl 3-hydroxylases. The protein is Prolyl 3-hydroxylase 3 of Mus musculus (Mouse).